The chain runs to 83 residues: Acid shock protein (83 aa).

Residues 1 to 21 form the signal peptide; that stretch reads MKKVLALVVAAAMGLSSAAFA. Residues 22-40 are compositionally biased toward low complexity; it reads AETATPAKTATPAKTTQNT. A propeptide spanning residues 22–56 is cleaved from the precursor; that stretch reads AETATPAKTATPAKTTQNTQHHKKQHKKTVEQKAQ. Residues 22–83 are disordered; it reads AETATPAKTA…TSKTTSQPAA (62 aa). A compositionally biased stretch (basic residues) spans 57–70; that stretch reads AAKKHQKKDGKKAP. The span at 71 to 83 shows a compositional bias: low complexity; it reads AKSTSKTTSQPAA.

This sequence belongs to the Asr family. Proteolytic processing gives rise to the active protein.

It localises to the periplasm. Its function is as follows. Required for growth and/or survival at acidic conditions. This Salmonella heidelberg (strain SL476) protein is Acid shock protein.